A 609-amino-acid polypeptide reads, in one-letter code: Glutamine--fructose-6-phosphate aminotransferase [isomerizing] (609 aa).

The active-site Nucleophile; for GATase activity is Cys2. A Glutamine amidotransferase type-2 domain is found at 2–217 (CGIVGAIAGR…DGDTAEIRRD (216 aa)). SIS domains follow at residues 285 to 425 (AESV…LRGA) and 458 to 599 (WAEC…VDKP). Residue Lys604 is the For Fru-6P isomerization activity of the active site.

As to quaternary structure, homodimer.

The protein resides in the cytoplasm. It catalyses the reaction D-fructose 6-phosphate + L-glutamine = D-glucosamine 6-phosphate + L-glutamate. Catalyzes the first step in hexosamine metabolism, converting fructose-6P into glucosamine-6P using glutamine as a nitrogen source. The protein is Glutamine--fructose-6-phosphate aminotransferase [isomerizing] of Xylella fastidiosa (strain Temecula1 / ATCC 700964).